The sequence spans 1704 residues: Nonribosomal peptide synthetase ivoA (1704 aa).

The interval 234-620 (EEQAIARPDQ…HGRKDLEVKI (387 aa)) is adenylation. Positions 748 to 827 (NLISDPSDSM…EMATKTSAVE (80 aa)) constitute a Carrier domain. An O-(pantetheine 4'-phosphoryl)serine modification is found at Ser-785. The tract at residues 840–1266 (FPLSPVQQMY…QELLETAVER (427 aa)) is epimerization (E) domain. The condensation stretch occupies residues 1325 to 1477 (VQGDWTIEKT…AQSSTPSARK (153 aa)).

Belongs to the NRP synthetase family.

The catalysed reaction is L-tryptophan + ATP + H2O = D-tryptophan + AMP + diphosphate + H(+). Its pathway is pigment biosynthesis. In terms of biological role, nonribosomal peptide synthetase; part of the pathway that mediates the biosynthesis of the gray-brown conidiophore pigment. The first step of the pathway is performed by the nonribosomal peptide synthetase ivoA that catalyzes ATP-dependent unidirectional stereoinversion of L-tryptophan to D-tryptophan with complete conversion. While the stereoinversion is catalyzed by the epimerization (E) domain of ivoA, the terminal condensation (C) domain stereoselectively hydrolyzes D-tryptophanyl-S-phosphopantetheine thioester and thus represents a non-canonical C domain function. D-tryptophan is acetylated, probably by an endogenous acetyltransferase. N-acetyltryptophan is further 6-hydroxylated into N-acetyl-6-hydroxytryptophan (AHT) by the cytochrome P450 monooxygenase ivoC. N-acetyl-6-hydroxytryptophan is substrate of the N-acetyl-6-hydroxytryptophan oxidase ivoB to produce the gray-brown conidiophore pigment. This chain is Nonribosomal peptide synthetase ivoA, found in Emericella nidulans (strain FGSC A4 / ATCC 38163 / CBS 112.46 / NRRL 194 / M139) (Aspergillus nidulans).